The following is a 424-amino-acid chain: MFLLPRFVLVSCIIGSLGFDNPPTNVVSHLNGDWFLFGDSRSDCNHVVTTNPRNYSYMDLNPALCGSGKISAKAGNSIFRSFHFTDFYNYTGEGQQIIFYEGVNFTPYHAFKCITSGSNDIWMQNKGLFYTQVYKNMAVYRSLTFVNVPYVYNGSAQSTALCKSGSLVLNNPAYIAREANFGDYYYKVEADFYLSGCDEYIVPLCIFNGKFLSNTKYYDDSQYYFNKDTGVIYGLNSTETITTGFDFNCHYLVLPSGNYLAISNELLLTVPTKAICLNKRKDFTPVQVVDSRWNNARQSDNMTAVACQPPYCYFRNSTTNYVGVYDINHGDAGFTSILSGLLYDSPCFSQQGVFRYDNVSSVWPLYPYGRCPTAADINTPDVPICVYDPLPIILLGILLGVAVIIIVVLLLYFMVDNGTRLHDA.

An N-terminal signal peptide occupies residues 1-16 (MFLLPRFVLVSCIIGS). Residues 7–127 (FVLVSCIIGS…SNDIWMQNKG (121 aa)) are esterase domain 1. Residues 17-392 (LGFDNPPTNV…PICVYDPLPI (376 aa)) lie on the Virion surface side of the membrane. The active-site Nucleophile is serine 40. Cysteine 44 and cysteine 65 are oxidised to a cystine. Asparagine 54, asparagine 89, asparagine 153, asparagine 236, and asparagine 301 each carry an N-linked (GlcNAc...) asparagine; by host glycan. Disulfide bonds link cysteine 113–cysteine 162, cysteine 197–cysteine 276, and cysteine 205–cysteine 249. Residues 128–266 (LFYTQVYKNM…GNYLAISNEL (139 aa)) form a receptor binding region. The segment at 267-379 (LLTVPTKAIC…RCPTAADINT (113 aa)) is esterase domain 2. A disulfide bridge links cysteine 307 with cysteine 312. Asparagine 316 is a glycosylation site (N-linked (GlcNAc...) asparagine; by host). Catalysis depends on charge relay system residues aspartate 326 and histidine 329. Residues cysteine 347 and cysteine 371 are joined by a disulfide bond. N-linked (GlcNAc...) asparagine; by host glycosylation is present at asparagine 358. A helical transmembrane segment spans residues 393–413 (ILLGILLGVAVIIIVVLLLYF). Residues 414–424 (MVDNGTRLHDA) are Intravirion-facing. N-linked (GlcNAc...) asparagine; by host glycosylation occurs at asparagine 417.

It belongs to the influenza type C/coronaviruses hemagglutinin-esterase family. Homodimer; disulfide-linked. Forms a complex with the M protein in the pre-Golgi. Associates then with S-M complex to form a ternary complex S-M-HE. Post-translationally, N-glycosylated in the host RER.

Its subcellular location is the virion membrane. It localises to the host cell membrane. It carries out the reaction N-acetyl-9-O-acetylneuraminate + H2O = N-acetylneuraminate + acetate + H(+). The catalysed reaction is N-acetyl-4-O-acetylneuraminate + H2O = N-acetylneuraminate + acetate + H(+). Structural protein that makes short spikes at the surface of the virus. Contains receptor binding and receptor-destroying activities. Mediates de-O-acetylation of N-acetyl-4-O-acetylneuraminic acid, which is probably the receptor determinant recognized by the virus on the surface of erythrocytes and susceptible cells. This receptor-destroying activity is important for virus release as it probably helps preventing self-aggregation and ensures the efficient spread of the progeny virus from cell to cell. May serve as a secondary viral attachment protein for initiating infection, the spike protein being the major one. May become a target for both the humoral and the cellular branches of the immune system. The polypeptide is Hemagglutinin-esterase (Bovine coronavirus (strain 98TXSF-110-LUN) (BCoV-LUN)).